Reading from the N-terminus, the 249-residue chain is Cell division protein FtsQ (249 aa).

Over 1–6 (MKFILF) the chain is Cytoplasmic. The helical transmembrane segment at 7-23 (ALLVSAGSWYGWKQLHS) threads the bilayer. Over 24–249 (QDAVSKPIRY…YKNVMKERRI (226 aa)) the chain is Periplasmic. A POTRA domain is found at 29 to 98 (KPIRYVKIEG…DAVHIKITEQ (70 aa)).

It belongs to the FtsQ/DivIB family. FtsQ subfamily. In terms of assembly, part of a complex composed of FtsB, FtsL and FtsQ.

The protein localises to the cell inner membrane. Functionally, essential cell division protein. May link together the upstream cell division proteins, which are predominantly cytoplasmic, with the downstream cell division proteins, which are predominantly periplasmic. May control correct divisome assembly. In Methylomonas methanica (strain DSM 25384 / MC09), this protein is Cell division protein FtsQ.